The following is a 343-amino-acid chain: Geranylgeranyl pyrophosphate synthase (343 aa).

The span at 1–12 (MAYTVEPREHSK) shows a compositional bias: basic and acidic residues. Residues 1–26 (MAYTVEPREHSKNTTLPTVAMPPSPP) form a disordered region. The isopentenyl diphosphate site is built by lysine 69, arginine 72, and histidine 101. Residues aspartate 108 and aspartate 112 each contribute to the Mg(2+) site. Arginine 117 contributes to the dimethylallyl diphosphate binding site. An isopentenyl diphosphate-binding site is contributed by arginine 118. 2 residues coordinate dimethylallyl diphosphate: threonine 196 and glutamine 229. Aspartate 232 contributes to the Mg(2+) binding site. Asparagine 236, lysine 246, and lysine 256 together coordinate dimethylallyl diphosphate.

The protein belongs to the FPP/GGPP synthase family. The cofactor is Mg(2+).

It catalyses the reaction isopentenyl diphosphate + dimethylallyl diphosphate = (2E)-geranyl diphosphate + diphosphate. The catalysed reaction is isopentenyl diphosphate + (2E)-geranyl diphosphate = (2E,6E)-farnesyl diphosphate + diphosphate. The enzyme catalyses isopentenyl diphosphate + (2E,6E)-farnesyl diphosphate = (2E,6E,10E)-geranylgeranyl diphosphate + diphosphate. It functions in the pathway mycotoxin biosynthesis. Geranylgeranyl pyrophosphate synthase; part of the gene cluster that mediates the biosynthesis of aphidicolin, a specific inhibitor of eukaryotic DNA synthesis and DNA polymerase alpha. The geranylgeranyl pyrophosphate synthase GGS is required for supplying a sufficient amount of geranylgeranyl diphosphate (GGDP), the general precursor of diterpenes. The diterpene synthase ACS then catalyzes the conversion of geranylgeranyl diphosphate to aphidicolan-16-beta-ol via the intermediate syn-copalyldiphosphate (syn-CDP). In addition to aphidicolan-16-beta-ol, the enzyme also produces low levels of amphidicol-15-ene and amphidicol-16-ene. The cytochrome P450 monooxygenase P450-2 then catalyzes the two-step hydroxylation from aphidicolan-16-beta-ol to 3-deoxyaphidicolin via a 17,3-deoxyaphidicolin intermediate. Finally, the cytochrome P450 monooxygenase P450-1 converts 3-deoxyaphidicolin to aphidicolin. The sequence is that of Geranylgeranyl pyrophosphate synthase (GGS) from Neocamarosporium betae (Beet black rot fungus).